Reading from the N-terminus, the 264-residue chain is Glutamate racemase (264 aa).

Substrate-binding positions include 12 to 13 (DS) and 44 to 45 (YG). Residue C76 is the Proton donor/acceptor of the active site. 77–78 (NT) contributes to the substrate binding site. C186 (proton donor/acceptor) is an active-site residue. 187 to 188 (TH) lines the substrate pocket.

This sequence belongs to the aspartate/glutamate racemases family.

It catalyses the reaction L-glutamate = D-glutamate. It participates in cell wall biogenesis; peptidoglycan biosynthesis. Provides the (R)-glutamate required for cell wall biosynthesis. The protein is Glutamate racemase of Fusobacterium nucleatum subsp. nucleatum (strain ATCC 25586 / DSM 15643 / BCRC 10681 / CIP 101130 / JCM 8532 / KCTC 2640 / LMG 13131 / VPI 4355).